The sequence spans 154 residues: Insulin-like growth factor 1 (154 aa).

The interval 50 to 78 is b; the sequence is GPETLCGAELVDALQFVCGDRGFYFNKPT. 3 disulfide bridges follow: C55–C97, C67–C110, and C96–C101. A c region spans residues 79-90; it reads GYGSSSRRAPQT. Residues 91–111 form an a region; that stretch reads GIVDECCFRSCDLRRLEMYCA. The tract at residues 112–119 is d; the sequence is PLKPAKSA. A propeptide spans 120-154 (e peptide); sequence RSVRAQRHTDMPKAQKEVHLKNTSRGSAGNKNYRM. The disordered stretch occupies residues 121 to 154; sequence SVRAQRHTDMPKAQKEVHLKNTSRGSAGNKNYRM. Residues 126-139 show a composition bias toward basic and acidic residues; the sequence is RHTDMPKAQKEVHL. The segment covering 140–154 has biased composition (polar residues); it reads KNTSRGSAGNKNYRM.

Belongs to the insulin family. As to quaternary structure, forms a ternary complex with IGFR1 and ITGAV:ITGB3. Forms a ternary complex with IGFR1 and ITGA6:ITGB4. Forms a ternary complex with IGFBP3 and ALS.

Its subcellular location is the secreted. Its function is as follows. The insulin-like growth factors, isolated from plasma, are structurally and functionally related to insulin but have a much higher growth-promoting activity. May be a physiological regulator of [1-14C]-2-deoxy-D-glucose (2DG) transport and glycogen synthesis in osteoblasts. Stimulates glucose transport in bone-derived osteoblastic (PyMS) cells and is effective at much lower concentrations than insulin, not only regarding glycogen and DNA synthesis but also with regard to enhancing glucose uptake. May play a role in synapse maturation. Ca(2+)-dependent exocytosis of IGF1 is required for sensory perception of smell in the olfactory bulb. Acts as a ligand for IGF1R. Binds to the alpha subunit of IGF1R, leading to the activation of the intrinsic tyrosine kinase activity which autophosphorylates tyrosine residues in the beta subunit thus initiating a cascade of down-stream signaling events leading to activation of the PI3K-AKT/PKB and the Ras-MAPK pathways. Binds to integrins ITGAV:ITGB3 and ITGA6:ITGB4. Its binding to integrins and subsequent ternary complex formation with integrins and IGFR1 are essential for IGF1 signaling. Induces the phosphorylation and activation of IGFR1, MAPK3/ERK1, MAPK1/ERK2 and AKT1. As part of the MAPK/ERK signaling pathway, acts as a negative regulator of apoptosis in cardiomyocytes via promotion of STUB1/CHIP-mediated ubiquitination and degradation of ICER-type isoforms of CREM. In Bos taurus (Bovine), this protein is Insulin-like growth factor 1.